The primary structure comprises 179 residues: Replication restart protein DnaT (179 aa).

The segment covering 151 to 168 (SRSSNGGMPQRDINSVSE) has biased composition (polar residues). The segment at 151–179 (SRSSNGGMPQRDINSVSEPDNHIPPGFRG) is disordered.

This sequence belongs to the DnaT family. As to quaternary structure, homooligomerizes. Interacts with PriB. Component of the replication restart primosome. Primosome assembly occurs via a 'hand-off' mechanism. PriA binds to replication forks, subsequently PriB then DnaT bind; DnaT then displaces ssDNA to generate the helicase loading substrate.

Its function is as follows. Involved in the restart of stalled replication forks, which reloads the replicative helicase on sites other than the origin of replication. Can function in multiple replication restart pathways. Displaces ssDNA from a PriB-ssDNA complex. Probably forms a spiral filament on ssDNA. This Salmonella arizonae (strain ATCC BAA-731 / CDC346-86 / RSK2980) protein is Replication restart protein DnaT.